Consider the following 76-residue polypeptide: Omega-scoloptoxin(13)-Ssm2b (76 aa).

Residues 1-22 form the signal peptide; that stretch reads MAYIYALIFAIVVCMNTDVIQA.

This sequence belongs to the scoloptoxin-13 family. In terms of processing, contains 3 disulfide bonds. In terms of tissue distribution, expressed by the venom gland.

Its subcellular location is the secreted. In terms of biological role, inhibits voltage-gated calcium channel (Cav) currents. The sequence is that of Omega-scoloptoxin(13)-Ssm2b from Scolopendra mutilans (Chinese red-headed centipede).